Reading from the N-terminus, the 156-residue chain is Small ribosomal subunit protein uS7 (156 aa).

This sequence belongs to the universal ribosomal protein uS7 family. Part of the 30S ribosomal subunit. Contacts proteins S9 and S11.

Its function is as follows. One of the primary rRNA binding proteins, it binds directly to 16S rRNA where it nucleates assembly of the head domain of the 30S subunit. Is located at the subunit interface close to the decoding center, probably blocks exit of the E-site tRNA. This chain is Small ribosomal subunit protein uS7, found in Rhizobium etli (strain ATCC 51251 / DSM 11541 / JCM 21823 / NBRC 15573 / CFN 42).